Reading from the N-terminus, the 294-residue chain is Nucleotide-binding protein CPF_0343 (294 aa).

8 to 15 (GLSGAGKT) is an ATP binding site. Residue 59-62 (DIRG) participates in GTP binding.

The protein belongs to the RapZ-like family.

Displays ATPase and GTPase activities. This is Nucleotide-binding protein CPF_0343 from Clostridium perfringens (strain ATCC 13124 / DSM 756 / JCM 1290 / NCIMB 6125 / NCTC 8237 / Type A).